A 349-amino-acid chain; its full sequence is 4-hydroxy-2-oxovalerate aldolase 1 (349 aa).

Positions 9-261 (ITVHDMTLRD…ATGVDVFRIQ (253 aa)) constitute a Pyruvate carboxyltransferase domain. Position 17–18 (17–18 (RD)) interacts with substrate. Mn(2+) is bound at residue Asp-18. The active-site Proton acceptor is His-21. Residues Ser-171 and His-200 each coordinate substrate. Mn(2+) contacts are provided by His-200 and His-202. Residue Tyr-291 coordinates substrate.

This sequence belongs to the 4-hydroxy-2-oxovalerate aldolase family.

It carries out the reaction (S)-4-hydroxy-2-oxopentanoate = acetaldehyde + pyruvate. This Methylibium petroleiphilum (strain ATCC BAA-1232 / LMG 22953 / PM1) protein is 4-hydroxy-2-oxovalerate aldolase 1.